The sequence spans 164 residues: B-phycoerythrin alpha chain (164 aa).

Residues Cys82 and Cys139 each coordinate (2R,3E)-phycoerythrobilin.

The protein belongs to the phycobiliprotein family. Heteromer of 6 alpha, 6 beta and one gamma chain. Post-translationally, contains two covalently linked bilin chromophores.

It is found in the plastid. The protein resides in the chloroplast thylakoid membrane. Functionally, light-harvesting photosynthetic bile pigment-protein from the phycobiliprotein complex. This is B-phycoerythrin alpha chain (cpeA) from Porphyridium sordidum (Red alga).